We begin with the raw amino-acid sequence, 288 residues long: N-acetylneuraminate lyase (288 aa).

Aceneuramate contacts are provided by Ser-44 and Thr-45. Tyr-133 acts as the Proton donor in catalysis. The Schiff-base intermediate with substrate role is filled by Lys-161. Aceneuramate contacts are provided by Thr-163, Gly-185, Asp-187, Glu-188, and Ser-204.

Belongs to the DapA family. NanA subfamily. As to quaternary structure, homotetramer.

It is found in the cytoplasm. The enzyme catalyses aceneuramate = aldehydo-N-acetyl-D-mannosamine + pyruvate. It functions in the pathway amino-sugar metabolism; N-acetylneuraminate degradation; D-fructose 6-phosphate from N-acetylneuraminate: step 1/5. Catalyzes the reversible aldol cleavage of N-acetylneuraminic acid (sialic acid; Neu5Ac) to form pyruvate and N-acetylmannosamine (ManNAc) via a Schiff base intermediate. This chain is N-acetylneuraminate lyase, found in Clostridium perfringens (strain SM101 / Type A).